The sequence spans 1499 residues: B-cell CLL/lymphoma 9-like protein (1499 aa).

Disordered regions lie at residues 1 to 238 and 271 to 500; these read MRIL…PPSQ and VPRA…MGQQ. The segment covering 20–37 has biased composition (pro residues); the sequence is GSPPLSPRGHCPPAPAKP. Ser21 and Ser25 each carry phosphoserine. Lys36 is modified (N6-acetyllysine). Polar residues-rich tracts occupy residues 45–70 and 85–96; these read TNHG…TCNV and NQISPSNSSLKN. Ser88 carries the post-translational modification Phosphoserine. An N6-acetyllysine mark is found at Lys108 and Lys110. 2 stretches are compositionally biased toward basic and acidic residues: residues 114–126 and 134–153; these read DRSV…EQRE and SEAK…ERKQ. A phosphoserine mark is found at Ser116 and Ser118. Lys137 is modified (N6-acetyllysine). Over residues 193–205 the composition is skewed to polar residues; the sequence is PGQTTQLPLSESS. Residues 222-232 are compositionally biased toward gly residues; sequence PGGGGGGGGVP. Pro residues-rich tracts occupy residues 281–291 and 301–325; these read KVPPTPEPLPL and SQPP…PPEG. The interval 304–533 is necessary for interaction with CTNNB1; the sequence is PPLPPPPPPA…QEEYYEEKRR (230 aa). Composition is skewed to low complexity over residues 351–363 and 370–387; these read THPN…TANN and DPSS…AAPG. Over residues 399–421 the composition is skewed to basic and acidic residues; sequence LSKEQLEHRERSLQTLRDIERLL. Position 424 is a phosphoserine (Ser424). Positions 445–458 are enriched in pro residues; sequence AQAPPPPQQPPTAP. At Thr514 the chain carries Phosphothreonine. At Arg680 the chain carries Asymmetric dimethylarginine. 14 positions are modified to phosphoserine: Ser750, Ser813, Ser915, Ser926, Ser938, Ser942, Ser947, Ser975, Ser987, Ser991, Ser997, Ser1004, Ser1010, and Ser1017. 2 disordered regions span residues 888 to 1084 and 1116 to 1201; these read SHMP…QNPL and ELLP…PQNS. The segment covering 935 to 960 has biased composition (polar residues); sequence PTLSQVHSPLVTSPSANLKSPQTPSQ. Over residues 978 to 996 the composition is skewed to polar residues; it reads VLGSSLSVRSPTGSPSRLK. 2 stretches are compositionally biased toward polar residues: residues 1019–1041 and 1069–1084; these read GVSQ…NMEQ and LPFT…QNPL. Pro residues-rich tracts occupy residues 1122–1132 and 1168–1179; these read PLLPPPPPPQG and HEPPPAMLPSPT. Residue Lys1344 forms a Glycyl lysine isopeptide (Lys-Gly) (interchain with G-Cter in SUMO2) linkage.

The protein belongs to the BCL9 family. As to quaternary structure, found in a complex with CDC73; CTNNB1 and PYGO1. Interacts with CTNNB1. As to expression, expressed in breast, ductal and invasive ductal carcinomas of the breast, sporadic colorectal adenomas and carcinomas (at protein level). Expressed in fetal brain. Expressed in lung, amygdala, eye, prostate, pancreatic and prostate cancers, head and neck tumors and embryonal tumor.

It localises to the nucleus. Functionally, transcriptional regulator that acts as an activator. Promotes beta-catenin transcriptional activity. Plays a role in tumorigenesis. Enhances the neoplastic transforming activity of CTNNB1. The protein is B-cell CLL/lymphoma 9-like protein (BCL9L) of Homo sapiens (Human).